A 384-amino-acid chain; its full sequence is Queuine tRNA-ribosyltransferase (384 aa).

Residue Asp-92 is the Proton acceptor of the active site. Residues 92 to 96 (DSGGF), Asp-146, Gln-190, and Gly-217 contribute to the substrate site. Residues 248–254 (GVGRPED) form an RNA binding region. Asp-267 functions as the Nucleophile in the catalytic mechanism. The tract at residues 272-276 (TRHAR) is RNA binding; important for wobble base 34 recognition. 4 residues coordinate Zn(2+): Cys-305, Cys-307, Cys-310, and His-337.

The protein belongs to the queuine tRNA-ribosyltransferase family. As to quaternary structure, homodimer. Within each dimer, one monomer is responsible for RNA recognition and catalysis, while the other monomer binds to the replacement base PreQ1. Zn(2+) is required as a cofactor.

The enzyme catalyses 7-aminomethyl-7-carbaguanine + guanosine(34) in tRNA = 7-aminomethyl-7-carbaguanosine(34) in tRNA + guanine. It functions in the pathway tRNA modification; tRNA-queuosine biosynthesis. Its function is as follows. Catalyzes the base-exchange of a guanine (G) residue with the queuine precursor 7-aminomethyl-7-deazaguanine (PreQ1) at position 34 (anticodon wobble position) in tRNAs with GU(N) anticodons (tRNA-Asp, -Asn, -His and -Tyr). Catalysis occurs through a double-displacement mechanism. The nucleophile active site attacks the C1' of nucleotide 34 to detach the guanine base from the RNA, forming a covalent enzyme-RNA intermediate. The proton acceptor active site deprotonates the incoming PreQ1, allowing a nucleophilic attack on the C1' of the ribose to form the product. After dissociation, two additional enzymatic reactions on the tRNA convert PreQ1 to queuine (Q), resulting in the hypermodified nucleoside queuosine (7-(((4,5-cis-dihydroxy-2-cyclopenten-1-yl)amino)methyl)-7-deazaguanosine). The protein is Queuine tRNA-ribosyltransferase of Xylella fastidiosa (strain M12).